The chain runs to 475 residues: Rho GTPase-activating protein 15 (475 aa).

A compositionally biased stretch (polar residues) spans 1 to 22 (MQKSTNSDTSVETLNSTRQGTG). The segment at 1-23 (MQKSTNSDTSVETLNSTRQGTGA) is disordered. Ser43, Ser103, Ser196, Ser199, and Ser243 each carry phosphoserine. The PH domain maps to 79–189 (MVEKEGYLQK…WFHAIKNAID (111 aa)). Residues 281-470 (SHLHKVCERE…LMLSEYSKIF (190 aa)) form the Rho-GAP domain.

In terms of tissue distribution, expressed in lung, liver and lymphoid cells.

It localises to the cytoplasm. Its subcellular location is the membrane. Its function is as follows. GTPase activator for the Rho-type GTPases by converting them to an inactive GDP-bound state. Has activity toward RAC1. Overexpression results in an increase in actin stress fibers and cell contraction. The polypeptide is Rho GTPase-activating protein 15 (ARHGAP15) (Homo sapiens (Human)).